The chain runs to 1018 residues: Contactin-1 (1018 aa).

Positions 1–20 are cleaved as a signal peptide; it reads MKMWLLVSHLVIISITTCLA. Ig-like C2-type domains follow at residues 41–131, 137–223, 241–326, 331–407, 413–500, and 504–601; these read PIFE…ATLS, PFPP…KSVF, PADI…ARIY, PEWV…AELK, PTFE…GTLV, and PTRI…LVVR. 2 cysteine pairs are disulfide-bonded: cysteine 65–cysteine 114 and cysteine 158–cysteine 211. N-linked (GlcNAc...) asparagine glycans are attached at residues asparagine 208 and asparagine 258. Cysteine 263 and cysteine 310 are oxidised to a cystine. The N-linked (GlcNAc...) asparagine glycan is linked to asparagine 338. 2 cysteine pairs are disulfide-bonded: cysteine 352–cysteine 391 and cysteine 436–cysteine 484. 2 N-linked (GlcNAc...) asparagine glycosylation sites follow: asparagine 457 and asparagine 473. N-linked (GlcNAc...) (complex) asparagine glycosylation occurs at asparagine 494. The N-linked (GlcNAc...) asparagine glycan is linked to asparagine 521. A disulfide bond links cysteine 526 and cysteine 583. N-linked (GlcNAc...) asparagine glycosylation is present at asparagine 591. 4 consecutive Fibronectin type-III domains span residues 606 to 704, 709 to 806, 811 to 906, and 907 to 1000; these read PPGG…TDGA, APSD…SAQD, APTE…APPS, and QPPR…TLSP. The disordered stretch occupies residues 693 to 717; it reads SIPSNRIKTDGAAPNVAPSDVGGGG. The N-linked (GlcNAc...) asparagine glycan is linked to asparagine 933. Serine 993 carries the GPI-anchor amidated serine lipid modification. Positions 994–1018 are cleaved as a propeptide — removed in mature form; that stretch reads GAPTLSPSLLGLLLPAFGILVYLEF.

Belongs to the immunoglobulin superfamily. Contactin family. In terms of assembly, monomer. Interacts with CNTNAP1 in cis form. Binds to the carbonic-anhydrase like domain of PTPRZ1. Interacts with NOTCH1 and TNR. Detected in a complex with NRCAM and PTPRB. Interacts with TASOR. Strongly expressed in brain and in neuroblastoma and retinoblastoma cell lines. Lower levels of expression in lung, pancreas, kidney and skeletal muscle.

It localises to the cell membrane. Contactins mediate cell surface interactions during nervous system development. Involved in the formation of paranodal axo-glial junctions in myelinated peripheral nerves and in the signaling between axons and myelinating glial cells via its association with CNTNAP1. Participates in oligodendrocytes generation by acting as a ligand of NOTCH1. Its association with NOTCH1 promotes NOTCH1 activation through the released notch intracellular domain (NICD) and subsequent translocation to the nucleus. Interaction with TNR induces a repulsion of neurons and an inhibition of neurite outgrowth. The polypeptide is Contactin-1 (CNTN1) (Homo sapiens (Human)).